The following is a 482-amino-acid chain: tRNA sulfurtransferase (482 aa).

The region spanning 61–165 is the THUMP domain; sequence AAIVAELTRI…DERLILVTAR (105 aa). Residues 183 to 184, Lys265, Gly287, and Gln296 each bind ATP; that span reads LI. Residues Cys344 and Cys456 are joined by a disulfide bond. The 79-residue stretch at 404–482 folds into the Rhodanese domain; sequence FSHNDVILDI…GFKNVKVYRP (79 aa). The active-site Cysteine persulfide intermediate is Cys456.

Belongs to the ThiI family.

The protein localises to the cytoplasm. It carries out the reaction [ThiI sulfur-carrier protein]-S-sulfanyl-L-cysteine + a uridine in tRNA + 2 reduced [2Fe-2S]-[ferredoxin] + ATP + H(+) = [ThiI sulfur-carrier protein]-L-cysteine + a 4-thiouridine in tRNA + 2 oxidized [2Fe-2S]-[ferredoxin] + AMP + diphosphate. The enzyme catalyses [ThiS sulfur-carrier protein]-C-terminal Gly-Gly-AMP + S-sulfanyl-L-cysteinyl-[cysteine desulfurase] + AH2 = [ThiS sulfur-carrier protein]-C-terminal-Gly-aminoethanethioate + L-cysteinyl-[cysteine desulfurase] + A + AMP + 2 H(+). It participates in cofactor biosynthesis; thiamine diphosphate biosynthesis. In terms of biological role, catalyzes the ATP-dependent transfer of a sulfur to tRNA to produce 4-thiouridine in position 8 of tRNAs, which functions as a near-UV photosensor. Also catalyzes the transfer of sulfur to the sulfur carrier protein ThiS, forming ThiS-thiocarboxylate. This is a step in the synthesis of thiazole, in the thiamine biosynthesis pathway. The sulfur is donated as persulfide by IscS. The chain is tRNA sulfurtransferase from Erwinia tasmaniensis (strain DSM 17950 / CFBP 7177 / CIP 109463 / NCPPB 4357 / Et1/99).